We begin with the raw amino-acid sequence, 149 residues long: Protegrin-5 (149 aa).

An N-terminal signal peptide occupies residues 1–29 (METQRASLCLGRWSLWLLLLGLVVPSASA). Positions 30–130 (QALSYREAVL…DITCNEVQGV (101 aa)) are excised as a propeptide. A disordered region spans residues 61 to 80 (DQPPKADEDPGTPKPVSFTV). Intrachain disulfides connect cysteine 85-cysteine 96, cysteine 107-cysteine 124, cysteine 136-cysteine 145, and cysteine 138-cysteine 143. Arginine 148 carries the post-translational modification Arginine amide.

Belongs to the cathelicidin family.

It is found in the secreted. Microbicidal activity. In Sus scrofa (Pig), this protein is Protegrin-5 (NPG5).